The sequence spans 56 residues: Endoregulin (56 aa).

The chain crosses the membrane as a helical span at residues 25–45 (LTVIGLFTSTFLLFVLFAVVF).

Homooligomer. Can also form heterooligomers with other sarcoplasmic/endoplasmic reticulum calcium ATPase (SERCA) regulators ARLN, PLN, SLN and STRIT1/DWORF. Monomer. Interacts as a monomer with ATP2A2/SERCA2; the interaction results in inhibition of ATP2A2 Ca(2+) affinity. In terms of tissue distribution, largely expressed in non-muscle tissues with the exception of weak expression in body wall muscles at 14.5 dpc. Expressed in epithelial cells of the trachea, bronchus, lung, intestine, pancreas, and liver.

Its subcellular location is the endoplasmic reticulum membrane. Functionally, inhibits the activity of the calcium ATPases ATP2A2/SERCA2 and ATP2A3/SERCA3 by decreasing their apparent affinity for Ca(2+). The chain is Endoregulin (Erln) from Mus musculus (Mouse).